A 143-amino-acid chain; its full sequence is Transcriptional regulator MraZ (143 aa).

2 consecutive SpoVT-AbrB domains span residues 5-47 and 76-119; these read QYEH…SLEE and AVEC…SKEV.

This sequence belongs to the MraZ family. Forms oligomers.

Its subcellular location is the cytoplasm. It localises to the nucleoid. The chain is Transcriptional regulator MraZ from Thermoanaerobacter sp. (strain X514).